The following is a 673-amino-acid chain: Probable multidrug resistance ABC transporter ATP-binding/permease protein YheH (673 aa).

Helical transmembrane passes span 18-38 (LITA…GPFI), 146-166 (IKGM…SVFF), 223-243 (LYVT…GIFT), 245-265 (LFLL…IIWL), and 347-367 (LAFV…AGIV). In terms of domain architecture, ABC transmembrane type-1 spans 18–398 (LITAVLLLTV…IVNQFSKLEL (381 aa)). Residues 430–664 (VEFRDVSFAY…EGQYYQMYEL (235 aa)) form the ABC transporter domain. An ATP-binding site is contributed by 463–470 (GHTGSGKS).

The protein belongs to the ABC transporter superfamily. Heterodimer composed of YheH and YheI.

The protein resides in the cell membrane. Inhibited by ortho-vanadate. Functionally, involved in the transport of four structurally unrelated drugs, including doxorubicin and mitoxantrone. Transmembrane domains (TMD) form a pore in the membrane and the ATP-binding domain (NBD) is responsible for energy generation. This Bacillus subtilis (strain 168) protein is Probable multidrug resistance ABC transporter ATP-binding/permease protein YheH (yheH).